Consider the following 463-residue polypeptide: Glutamate--tRNA ligase (463 aa).

The 'HIGH' region motif lies at 10–20 (PSPTGYLHIGG). Residues 252-256 (KLSKR) carry the 'KMSKS' region motif. Residue Lys255 participates in ATP binding.

It belongs to the class-I aminoacyl-tRNA synthetase family. Glutamate--tRNA ligase type 1 subfamily. Monomer.

It is found in the cytoplasm. It carries out the reaction tRNA(Glu) + L-glutamate + ATP = L-glutamyl-tRNA(Glu) + AMP + diphosphate. Functionally, catalyzes the attachment of glutamate to tRNA(Glu) in a two-step reaction: glutamate is first activated by ATP to form Glu-AMP and then transferred to the acceptor end of tRNA(Glu). This is Glutamate--tRNA ligase from Mycoplasmopsis agalactiae (strain NCTC 10123 / CIP 59.7 / PG2) (Mycoplasma agalactiae).